The following is a 192-amino-acid chain: Large ribosomal subunit protein uL24c (192 aa).

The transit peptide at 1–47 directs the protein to the chloroplast; it reads MAAMAALQSSFTSLSLSSNSFLGQRLFPSPTTLQVKTEGHSPCLIVM.

In terms of assembly, component of the chloroplast large ribosomal subunit (LSU). Mature 70S chloroplast ribosomes of higher plants consist of a small (30S) and a large (50S) subunit. The 30S small subunit contains 1 molecule of ribosomal RNA (16S rRNA) and 24 different proteins. The 50S large subunit contains 3 rRNA molecules (23S, 5S and 4.5S rRNA) and 33 different proteins.

It localises to the plastid. Its subcellular location is the chloroplast. In terms of biological role, component of the chloroplast ribosome (chloro-ribosome), a dedicated translation machinery responsible for the synthesis of chloroplast genome-encoded proteins, including proteins of the transcription and translation machinery and components of the photosynthetic apparatus. The polypeptide is Large ribosomal subunit protein uL24c (RPL24) (Spinacia oleracea (Spinach)).